The primary structure comprises 153 residues: Profilin (153 aa).

This sequence belongs to the profilin family. As to quaternary structure, occurs in many kinds of cells as a complex with monomeric actin in a 1:1 ratio.

The protein localises to the cytoplasm. The protein resides in the cytoskeleton. Binds to actin and affects the structure of the cytoskeleton. At high concentrations, profilin prevents the polymerization of actin, whereas it enhances it at low concentrations. By binding to PIP2, it inhibits the formation of IP3 and DG. This is Profilin from Tetrahymena pyriformis.